We begin with the raw amino-acid sequence, 273 residues long: Cyclic di-AMP synthase CdaA (273 aa).

Helical transmembrane passes span 12–32, 40–60, and 61–81; these read LGNA…IMVI, LLKG…LGLS, and TLQW…IIIF. Residues 82-242 enclose the DAC domain; the sequence is QPELRRALEQ…NGDLHRELTE (161 aa).

Belongs to the adenylate cyclase family. DacA/CdaA subfamily. In terms of assembly, probably a homodimer. Interacts with CdaR. May interact with GlmM.

It localises to the cell membrane. It carries out the reaction 2 ATP = 3',3'-c-di-AMP + 2 diphosphate. DAC activity is stimulated about 20-fold in E.coli by coexpression with CdaR. Its function is as follows. One of 3 paralogous diadenylate cyclases (DAC) in this bacteria, catalyzing the condensation of 2 ATP molecules into cyclic di-AMP (c-di-AMP). Upon expression in E.coli leads to c-di-AMP synthesis. Probably the main producer of c-di-AMP for the cell; is probably implicated in control of peptidoglycan synthesis. In B.subtilis c-di-AMP is a second messenger that mediates growth, DNA repair and cell wall homeostasis; it is toxic when present in excess. This Bacillus subtilis (strain 168) protein is Cyclic di-AMP synthase CdaA.